Here is a 166-residue protein sequence, read N- to C-terminus: Interferon gamma (166 aa).

An N-terminal signal peptide occupies residues 1 to 23; sequence MKYTSYILAFQLCIVLGSLGCYC. Glutamine 24 carries the post-translational modification Pyrrolidone carboxylic acid. N-linked (GlcNAc...) asparagine glycosylation is found at asparagine 48, asparagine 86, and asparagine 120.

This sequence belongs to the type II (or gamma) interferon family. Homodimer. Interacts with IFNGR1 (via extracellular domain); this interaction promotes IFNGR1 dimerization. Released primarily from activated T lymphocytes.

It is found in the secreted. Its function is as follows. Type II interferon produced by immune cells such as T-cells and NK cells that plays crucial roles in antimicrobial, antiviral, and antitumor responses by activating effector immune cells and enhancing antigen presentation. Primarily signals through the JAK-STAT pathway after interaction with its receptor IFNGR1 to affect gene regulation. Upon IFNG binding, IFNGR1 intracellular domain opens out to allow association of downstream signaling components JAK2, JAK1 and STAT1, leading to STAT1 activation, nuclear translocation and transcription of IFNG-regulated genes. Many of the induced genes are transcription factors such as IRF1 that are able to further drive regulation of a next wave of transcription. Plays a role in class I antigen presentation pathway by inducing a replacement of catalytic proteasome subunits with immunoproteasome subunits. In turn, increases the quantity, quality, and repertoire of peptides for class I MHC loading. Increases the efficiency of peptide generation also by inducing the expression of activator PA28 that associates with the proteasome and alters its proteolytic cleavage preference. Up-regulates as well MHC II complexes on the cell surface by promoting expression of several key molecules such as cathepsins B/CTSB, H/CTSH, and L/CTSL. Participates in the regulation of hematopoietic stem cells during development and under homeostatic conditions by affecting their development, quiescence, and differentiation. The protein is Interferon gamma (IFNG) of Saimiri sciureus (Common squirrel monkey).